We begin with the raw amino-acid sequence, 613 residues long: DNA mismatch repair protein MutL (613 aa).

The protein belongs to the DNA mismatch repair MutL/HexB family.

In terms of biological role, this protein is involved in the repair of mismatches in DNA. It is required for dam-dependent methyl-directed DNA mismatch repair. May act as a 'molecular matchmaker', a protein that promotes the formation of a stable complex between two or more DNA-binding proteins in an ATP-dependent manner without itself being part of a final effector complex. This chain is DNA mismatch repair protein MutL, found in Janthinobacterium sp. (strain Marseille) (Minibacterium massiliensis).